Reading from the N-terminus, the 195-residue chain is Molybdenum cofactor guanylyltransferase (195 aa).

Residues 10-12 (LAG), Lys-23, Asn-51, Asp-69, and Asp-99 each bind GTP. Position 99 (Asp-99) interacts with Mg(2+).

Belongs to the MobA family. Monomer. It depends on Mg(2+) as a cofactor.

It localises to the cytoplasm. The enzyme catalyses Mo-molybdopterin + GTP + H(+) = Mo-molybdopterin guanine dinucleotide + diphosphate. In terms of biological role, transfers a GMP moiety from GTP to Mo-molybdopterin (Mo-MPT) cofactor (Moco or molybdenum cofactor) to form Mo-molybdopterin guanine dinucleotide (Mo-MGD) cofactor. The chain is Molybdenum cofactor guanylyltransferase from Shewanella putrefaciens (strain CN-32 / ATCC BAA-453).